The following is a 204-amino-acid chain: uncharacterized protein (204 aa).

Helical transmembrane passes span 21-50, 92-114, 150-172, and 176-198; these read AWIV…LLFF, FFTA…WWWF, LGLR…VLSI, and LLAS…ETIL.

It localises to the cell membrane. This is an uncharacterized protein from Aquifex aeolicus (strain VF5).